A 60-amino-acid chain; its full sequence is UPF0434 protein Mfla_2088 (60 aa).

This sequence belongs to the UPF0434 family.

This Methylobacillus flagellatus (strain ATCC 51484 / DSM 6875 / VKM B-1610 / KT) protein is UPF0434 protein Mfla_2088.